We begin with the raw amino-acid sequence, 353 residues long: Photosystem II D2 protein (353 aa).

Thr2 is modified (N-acetylthreonine). Thr2 is modified (phosphothreonine). Residues 41 to 61 (CAYFALGGWFTGTTFVTSWYT) traverse the membrane as a helical segment. His118 provides a ligand contact to chlorophyll a. A helical transmembrane segment spans residues 125–141 (GFMLRQFELARSVQLRP). Pheophytin a is bound by residues Gln130 and Asn143. Residues 153–166 (VFVSVSLIYPLGQA) form a helical membrane-spanning segment. A chlorophyll a-binding site is contributed by His198. The helical transmembrane segment at 208-228 (AALLCAIHGATVENTLFEDGD) threads the bilayer. His215 and Phe262 together coordinate a plastoquinone. Position 215 (His215) interacts with Fe cation. His269 serves as a coordination point for Fe cation. A helical membrane pass occupies residues 279-295 (GLWMSAIGVVGLALNLR).

This sequence belongs to the reaction center PufL/M/PsbA/D family. In terms of assembly, PSII is composed of 1 copy each of membrane proteins PsbA, PsbB, PsbC, PsbD, PsbE, PsbF, PsbH, PsbI, PsbJ, PsbK, PsbL, PsbM, PsbT, PsbX, PsbY, PsbZ, Psb30/Ycf12, at least 3 peripheral proteins of the oxygen-evolving complex and a large number of cofactors. It forms dimeric complexes. The D1/D2 heterodimer binds P680, chlorophylls that are the primary electron donor of PSII, and subsequent electron acceptors. It shares a non-heme iron and each subunit binds pheophytin, quinone, additional chlorophylls, carotenoids and lipids. There is also a Cl(-1) ion associated with D1 and D2, which is required for oxygen evolution. The PSII complex binds additional chlorophylls, carotenoids and specific lipids. serves as cofactor.

The protein localises to the plastid. The protein resides in the chloroplast thylakoid membrane. It carries out the reaction 2 a plastoquinone + 4 hnu + 2 H2O = 2 a plastoquinol + O2. In terms of biological role, photosystem II (PSII) is a light-driven water:plastoquinone oxidoreductase that uses light energy to abstract electrons from H(2)O, generating O(2) and a proton gradient subsequently used for ATP formation. It consists of a core antenna complex that captures photons, and an electron transfer chain that converts photonic excitation into a charge separation. The D1/D2 (PsbA/PsbD) reaction center heterodimer binds P680, the primary electron donor of PSII as well as several subsequent electron acceptors. D2 is needed for assembly of a stable PSII complex. The sequence is that of Photosystem II D2 protein from Angiopteris evecta (Mule's foot fern).